Reading from the N-terminus, the 147-residue chain is RxLR effector protein Avr3a (147 aa).

Residues 1 to 21 (MRLAIMLSATAVAINFATSSA) form the signal peptide. Residues 44 to 59 (RLLRKNEENEETSEER) carry the RxLR-dEER motif. K48 is subject to N6-acetyllysine. An effector domain region spans residues 77-147 (ALTERADAKK…YMMHLGLTGY (71 aa)).

This sequence belongs to the RxLR effector family. In terms of assembly, forms homodimers via the RxLR-dEER motif. Interacts with host E3 ligase CMPG1. Interacts with host DRP2. Post-translationally, proteolytically cleaved. The cleavage site directly after the RxLR sequence and the high conservation among other effector proteins suggest that the RxLR motif might play a crucial role in the intracellular processing before secretion. Glycosylated. In terms of processing, N-acetylated at Lys-48 after cleavage.

It localises to the secreted. The protein localises to the host cytoplasm. Its function is as follows. Multifunctional effector that can suppress host BAK1/SERK3-mediated immunity through at least two different pathways. Manipulates plant immunity by targeting and stabilizing host E3 ligase CMPG1. Preventing the normal 26S proteasome-dependent degradation of potato CMPG1, and thus potentially of its protein substrates in the host cell, further abolishes host cell death during the biotrophic phase of infection. Also associates with and affects the function of the dynamin-related protein 2 (DRP2), a plant GTPase involved in immune receptor-mediated endocytosis. The Avr3a(EM) form evades recognition by R3a, thus does not trigger R3a-mediated hypersensitivity and does not suppress INF1-induced cell death. The protein is RxLR effector protein Avr3a of Phytophthora infestans (Potato late blight agent).